A 248-amino-acid chain; its full sequence is Ribosomal RNA small subunit methyltransferase J (248 aa).

S-adenosyl-L-methionine-binding positions include 98–99 (RD), 114–115 (ER), 150–151 (SS), and Asp-168.

The protein belongs to the methyltransferase superfamily. RsmJ family.

Its subcellular location is the cytoplasm. It catalyses the reaction guanosine(1516) in 16S rRNA + S-adenosyl-L-methionine = N(2)-methylguanosine(1516) in 16S rRNA + S-adenosyl-L-homocysteine + H(+). In terms of biological role, specifically methylates the guanosine in position 1516 of 16S rRNA. In Shewanella baltica (strain OS223), this protein is Ribosomal RNA small subunit methyltransferase J.